A 167-amino-acid polypeptide reads, in one-letter code: Endoribonuclease YbeY (167 aa).

Zn(2+) contacts are provided by histidine 132, histidine 136, and histidine 142.

This sequence belongs to the endoribonuclease YbeY family. Zn(2+) serves as cofactor.

The protein localises to the cytoplasm. Single strand-specific metallo-endoribonuclease involved in late-stage 70S ribosome quality control and in maturation of the 3' terminus of the 16S rRNA. In Clostridium beijerinckii (strain ATCC 51743 / NCIMB 8052) (Clostridium acetobutylicum), this protein is Endoribonuclease YbeY.